Here is a 346-residue protein sequence, read N- to C-terminus: Patr class I histocompatibility antigen, CH28 alpha chain (346 aa).

Positions 1–21 are cleaved as a signal peptide; the sequence is MAPRSLLLLFSGALALTETWA. Residues 22-111 form an alpha-1 region; it reads GSHSLRYFST…LLRRYNQSEA (90 aa). The Extracellular segment spans residues 22–305; it reads GSHSLRYFST…EQSPQPTIPI (284 aa). Asn-107 carries an N-linked (GlcNAc...) asparagine glycan. Residues 112-203 are alpha-2; that stretch reads GSHTLQGMNG…ENGKETLQRA (92 aa). 2 cysteine pairs are disulfide-bonded: Cys-122–Cys-185 and Cys-224–Cys-280. An alpha-3 region spans residues 204-295; that stretch reads DPPKAHIAHH…GLPQPLTLRW (92 aa). One can recognise an Ig-like C1-type domain in the interval 206-294; the sequence is PKAHIAHHPI…EGLPQPLTLR (89 aa). A connecting peptide region spans residues 296–305; that stretch reads EQSPQPTIPI. A helical membrane pass occupies residues 306 to 329; that stretch reads VGIVAGLVVLGAVVTGAVVAAVMW. Over 330 to 346 the chain is Cytoplasmic; sequence RKKSSDRNRGSYSQAAV.

This sequence belongs to the MHC class I family. In terms of assembly, heterodimer of an alpha chain and a beta chain (beta-2-microglobulin).

The protein resides in the membrane. Functionally, involved in the presentation of foreign antigens to the immune system. The protein is Patr class I histocompatibility antigen, CH28 alpha chain of Pan troglodytes (Chimpanzee).